A 162-amino-acid chain; its full sequence is Cytochrome c-type biogenesis protein CcmE (162 aa).

At 1–8 (MNPRRKKR) the chain is on the cytoplasmic side. A helical; Signal-anchor for type II membrane protein transmembrane segment spans residues 9 to 29 (LTLAVALIGGVAAIASLLLYA). Residues 30–162 (LNSNLNLFYT…YSQQKAPDTK (133 aa)) are Periplasmic-facing. Residues His131 and Tyr135 each coordinate heme. The interval 139 to 162 (EVAEAMGQKHEKLDYSQQKAPDTK) is disordered. Over residues 153–162 (YSQQKAPDTK) the composition is skewed to polar residues.

This sequence belongs to the CcmE/CycJ family.

It is found in the cell inner membrane. Heme chaperone required for the biogenesis of c-type cytochromes. Transiently binds heme delivered by CcmC and transfers the heme to apo-cytochromes in a process facilitated by CcmF and CcmH. This chain is Cytochrome c-type biogenesis protein CcmE, found in Shewanella putrefaciens (strain CN-32 / ATCC BAA-453).